Consider the following 540-residue polypeptide: 2,3-bisphosphoglycerate-independent phosphoglycerate mutase (540 aa).

Mn(2+)-binding residues include Asp24 and Ser74. Ser74 (phosphoserine intermediate) is an active-site residue. Residues His135, 165–166 (RD), Arg197, Arg203, 268–271 (RPDR), and Lys341 each bind substrate. Asp408, His412, Asp449, His450, and His467 together coordinate Mn(2+).

This sequence belongs to the BPG-independent phosphoglycerate mutase family. In terms of assembly, monomer. Mn(2+) serves as cofactor.

It catalyses the reaction (2R)-2-phosphoglycerate = (2R)-3-phosphoglycerate. The protein operates within carbohydrate degradation; glycolysis; pyruvate from D-glyceraldehyde 3-phosphate: step 3/5. Catalyzes the interconversion of 2-phosphoglycerate and 3-phosphoglycerate. This Prochlorococcus marinus (strain SARG / CCMP1375 / SS120) protein is 2,3-bisphosphoglycerate-independent phosphoglycerate mutase.